A 499-amino-acid polypeptide reads, in one-letter code: Thioredoxin reductase 1, cytoplasmic (499 aa).

FAD is bound by residues 22-23, 42-43, 58-59, and 63-67; these read SG, DF, TC, and SCIPK. An intrachain disulfide couples cysteine 59 to cysteine 64. The residue at position 68 (lysine 68) is an N6-succinyllysine. Tyrosine 131 carries the phosphotyrosine modification. FAD contacts are provided by residues 131 to 132 and threonine 161; that span reads YG. Residues arginine 166, 198–204, 221–222, arginine 226, 226–228, 292–293, and lysine 315 contribute to the NADP(+) site; these read ASYVALE, RS, RGF, and GR. Tyrosine 200 is an FAD binding site. FAD-binding positions include aspartate 334, 341-343, and histidine 472; that span reads ELT. Glutamate 341 provides a ligand contact to NADP(+). The active-site Proton acceptor is the histidine 472. The segment at residues 497 to 498 is a cross-link (cysteinyl-selenocysteine (Cys-Sec)); it reads CU. Selenocysteine 498 is a non-standard amino acid (selenocysteine).

Belongs to the class-I pyridine nucleotide-disulfide oxidoreductase family. In terms of assembly, homodimer. FAD is required as a cofactor. Post-translationally, ISGylated.

It is found in the cytoplasm. It catalyses the reaction [thioredoxin]-dithiol + NADP(+) = [thioredoxin]-disulfide + NADPH + H(+). The enzyme catalyses H2O2 + NADPH + H(+) = NADP(+) + 2 H2O. In terms of biological role, reduces disulfideprotein thioredoxin (Trx) to its dithiol-containing form. Homodimeric flavoprotein involved in the regulation of cellular redox reactions, growth and differentiation. Contains a selenocysteine residue at the C-terminal active site that is essential for catalysis. Also has reductase activity on hydrogen peroxide (H2O2). The sequence is that of Thioredoxin reductase 1, cytoplasmic (TXNRD1) from Sus scrofa (Pig).